We begin with the raw amino-acid sequence, 537 residues long: Cytochrome c oxidase subunit 1 (537 aa).

A helical membrane pass occupies residues 22–42 (ILYLLFGLVSGIIGSVFSFII). Ca(2+) contacts are provided by Glu45, Ala48, and Gly50. His68 contacts Fe(II)-heme a. 8 helical membrane passes run 70–90 (ILMI…NYLV), 104–124 (VNNF…ISAL), 152–172 (LAIL…VNLI), 190–210 (LFAW…PVLA), 241–261 (LFWF…FGVV), 279–299 (MLWA…HHLF), 318–338 (IAIP…GGAI), and 345–365 (MLYA…GVIL). Residue His247 coordinates Cu cation. The segment at residues 247-251 (HPEVY) is a cross-link (1'-histidyl-3'-tyrosine (His-Tyr)). Tyr251 serves as a coordination point for O2. Residues His296 and His297 each coordinate Cu cation. Residues His375 and Asp376 each coordinate Mg(2+). Transmembrane regions (helical) follow at residues 379-399 (FVVA…LCGA) and 418-438 (IQFW…HFLG). Residue His383 participates in heme a3 binding. His385 provides a ligand contact to Fe(II)-heme a. Pro447 is a Ca(2+) binding site. The chain crosses the membrane as a helical span at residues 458 to 478 (FVSSIGSVISILSLFLFMYVM).

The protein belongs to the heme-copper respiratory oxidase family. In terms of assembly, component of the cytochrome c oxidase (complex IV, CIV), a multisubunit enzyme composed of a catalytic core of 3 subunits and several supernumerary subunits. The complex exists as a monomer or a dimer and forms supercomplexes (SCs) in the inner mitochondrial membrane with ubiquinol-cytochrome c oxidoreductase (cytochrome b-c1 complex, complex III, CIII). It depends on heme as a cofactor. Cu cation is required as a cofactor.

Its subcellular location is the mitochondrion inner membrane. It carries out the reaction 4 Fe(II)-[cytochrome c] + O2 + 8 H(+)(in) = 4 Fe(III)-[cytochrome c] + 2 H2O + 4 H(+)(out). The protein operates within energy metabolism; oxidative phosphorylation. Functionally, component of the cytochrome c oxidase, the last enzyme in the mitochondrial electron transport chain which drives oxidative phosphorylation. The respiratory chain contains 3 multisubunit complexes succinate dehydrogenase (complex II, CII), ubiquinol-cytochrome c oxidoreductase (cytochrome b-c1 complex, complex III, CIII) and cytochrome c oxidase (complex IV, CIV), that cooperate to transfer electrons derived from NADH and succinate to molecular oxygen, creating an electrochemical gradient over the inner membrane that drives transmembrane transport and the ATP synthase. Cytochrome c oxidase is the component of the respiratory chain that catalyzes the reduction of oxygen to water. Electrons originating from reduced cytochrome c in the intermembrane space (IMS) are transferred via the dinuclear copper A center (CU(A)) of subunit 2 and heme A of subunit 1 to the active site in subunit 1, a binuclear center (BNC) formed by heme A3 and copper B (CU(B)). The BNC reduces molecular oxygen to 2 water molecules using 4 electrons from cytochrome c in the IMS and 4 protons from the mitochondrial matrix. The sequence is that of Cytochrome c oxidase subunit 1 (cox1) from Schizosaccharomyces pombe (strain 972 / ATCC 24843) (Fission yeast).